Consider the following 299-residue polypeptide: 33 kDa chaperonin (299 aa).

2 cysteine pairs are disulfide-bonded: cysteine 238/cysteine 240 and cysteine 271/cysteine 274.

Belongs to the HSP33 family. Under oxidizing conditions two disulfide bonds are formed involving the reactive cysteines. Under reducing conditions zinc is bound to the reactive cysteines and the protein is inactive.

It is found in the cytoplasm. Its function is as follows. Redox regulated molecular chaperone. Protects both thermally unfolding and oxidatively damaged proteins from irreversible aggregation. Plays an important role in the bacterial defense system toward oxidative stress. This is 33 kDa chaperonin from Alkaliphilus oremlandii (strain OhILAs) (Clostridium oremlandii (strain OhILAs)).